Consider the following 341-residue polypeptide: Aspartate--ammonia ligase (341 aa).

This sequence belongs to the class-II aminoacyl-tRNA synthetase family. AsnA subfamily.

Its subcellular location is the cytoplasm. The catalysed reaction is L-aspartate + NH4(+) + ATP = L-asparagine + AMP + diphosphate + H(+). It participates in amino-acid biosynthesis; L-asparagine biosynthesis; L-asparagine from L-aspartate (ammonia route): step 1/1. The chain is Aspartate--ammonia ligase from Clostridium tetani (strain Massachusetts / E88).